The sequence spans 350 residues: Renin receptor (350 aa).

An N-terminal signal peptide occupies residues 1 to 16; the sequence is MAVFVVLLALVAGVLG. At 17–302 the chain is on the extracellular side; that stretch reads NEFSILKSPG…YNLAYKYNFE (286 aa). The chain crosses the membrane as a helical span at residues 303-323; the sequence is YSVVFNMVLWIMIALALAVII. Over 324–350 the chain is Cytoplasmic; that stretch reads TSYNIWNMDPGYDSIIYRMTNQKIRMD. The short motif at 346-350 is the Mediates retrograde transport to the ER element; the sequence is KIRMD.

As to quaternary structure, interacts with renin. Accessory component of the multisubunit proton-transporting vacuolar (V)-ATPase protein pump. Interacts (via N-terminus) with ATP6AP1 (via N-terminus). Interacts with ATP6V0D1; ATP6V0D1 is a V-ATPase complex subunit and the interaction promotes V-ATPase complex assembly. Interacts with TMEM9; TMEM9 is a V-ATPase assembly regulator and the interaction induces the interaction with ATP6V0D1. Interacts with VMA21 (via N-terminus); VMA21 is a V-ATPase accessory component. Post-translationally, phosphorylated. In terms of processing, proteolytically cleaved by a furin-like convertase in the trans-Golgi network to generate N- and C-terminal fragments. Expressed in brain, heart, placenta, liver, kidney and pancreas. Barely detectable in lung and skeletal muscles. In the kidney cortex it is restricted to the mesangium of glomeruli. In the coronary and kidney artery it is expressed in the subendothelium, associated to smooth muscles where it colocalizes with REN. Expressed in vascular structures and by syncytiotrophoblast cells in the mature fetal placenta.

The protein resides in the endoplasmic reticulum membrane. The protein localises to the lysosome membrane. It is found in the cytoplasmic vesicle. Its subcellular location is the autophagosome membrane. It localises to the cell projection. The protein resides in the dendritic spine membrane. The protein localises to the axon. It is found in the endosome membrane. Its subcellular location is the clathrin-coated vesicle membrane. It localises to the secretory vesicle. The protein resides in the synaptic vesicle membrane. Functionally, multifunctional protein which functions as a renin, prorenin cellular receptor and is involved in the assembly of the lysosomal proton-transporting V-type ATPase (V-ATPase) and the acidification of the endo-lysosomal system. May mediate renin-dependent cellular responses by activating ERK1 and ERK2. By increasing the catalytic efficiency of renin in AGT/angiotensinogen conversion to angiotensin I, may also play a role in the renin-angiotensin system (RAS). Through its function in V-type ATPase (v-ATPase) assembly and acidification of the lysosome it regulates protein degradation and may control different signaling pathways important for proper brain development, synapse morphology and synaptic transmission. This is Renin receptor from Homo sapiens (Human).